Reading from the N-terminus, the 395-residue chain is MNQPWRTHLQTKLKQLHEQGQYRNLHVTEQAEETWLIRDEKRMLNLASNNYLGLAGDERLKEAAIVCTRKYGTGATASRLVVGNYSLYEEVERSICNWKGTEKALVVNSGFTANVGAISSLVCRHDIVFSDKLNHASIVDGIILSGAEHKRYRHNDLNHLEALLKTASPEKRKLIVTDTVFSMDGDTAHLRELVQLKEKYGAIIIVDEAHASGIYGIGGAGLSHIEKDLAQKIDIHMGTFSKALGCYGAYLTGDAIYIEYLQNMMRSFIFTTALPPSTLGAVQKAIEIVQEDHKRRENLIANGEYFRSKLREAGFNIGNSSTHIVPIVVGSNENTLRFSKRLQEAGIAAIAIRPPTVPVHSSRIRFAVTSQHTIADLKWAIDRITHIAKEEELFV.

A substrate-binding site is contributed by Arg-23. 110-111 (GF) lines the pyridoxal 5'-phosphate pocket. Position 135 (His-135) interacts with substrate. Pyridoxal 5'-phosphate contacts are provided by residues Ser-182, 207-210 (DEAH), and 239-242 (TFSK). N6-(pyridoxal phosphate)lysine is present on Lys-242. Thr-356 is a binding site for substrate.

The protein belongs to the class-II pyridoxal-phosphate-dependent aminotransferase family. BioF subfamily. As to quaternary structure, homodimer. Requires pyridoxal 5'-phosphate as cofactor.

The enzyme catalyses 6-carboxyhexanoyl-[ACP] + L-alanine + H(+) = (8S)-8-amino-7-oxononanoate + holo-[ACP] + CO2. It participates in cofactor biosynthesis; biotin biosynthesis. Its function is as follows. Catalyzes the decarboxylative condensation of pimeloyl-[acyl-carrier protein] and L-alanine to produce 8-amino-7-oxononanoate (AON), [acyl-carrier protein], and carbon dioxide. This Bacillus thuringiensis subsp. konkukian (strain 97-27) protein is Putative 8-amino-7-oxononanoate synthase (bioF).